The primary structure comprises 1597 residues: Mitogen-activated protein kinase kinase kinase 4 (1597 aa).

Disordered stretches follow at residues 1-128 (MRDA…VETV) and 424-465 (SPRP…PRVP). Over residues 59 to 69 (SDPEDFSDETN) the composition is skewed to acidic residues. Ser77 bears the Phosphoserine mark. Over residues 84–94 (QMKRLSAKHQR) the composition is skewed to basic residues. Ser424 carries the post-translational modification Phosphoserine. Phosphothreonine is present on Thr440. Residue Ser449 is modified to Phosphoserine. The segment covering 449-458 (SGTEESDEEP) has biased composition (acidic residues). Residue Thr451 is modified to Phosphothreonine. A phosphoserine mark is found at Ser454 and Ser492. Disordered stretches follow at residues 1137–1157 (RPVKVPRCHSDPPNPHLIIPT), 1190–1220 (AAGRPGPGGGDSVPAKPVNTAPDTRGSSVPE), and 1233–1263 (FRSLSRHSSPTEERDEPAYPRSDSSGSTRRS). The span at 1210-1219 (APDTRGSSVP) shows a compositional bias: polar residues. Phosphoserine is present on residues Ser1241 and Ser1263. Over residues 1241-1250 (SPTEERDEPA) the composition is skewed to basic and acidic residues. The region spanning 1332 to 1590 (WQRGNKIGEG…ASQLLDHAFV (259 aa)) is the Protein kinase domain. Residues 1338–1346 (IGEGQYGKV) and Lys1361 contribute to the ATP site. Asp1452 serves as the catalytic Proton acceptor.

This sequence belongs to the protein kinase superfamily. STE Ser/Thr protein kinase family. MAP kinase kinase kinase subfamily. As to quaternary structure, monomer and homodimer. Homodimerization enhances kinase activity. Interacts with CDC42. Interacts with TRAF4; this promotes homodimerization. Binds both upstream activators and downstream substrates in multimolecular complexes. Interacts with AXIN1 and DIXDC1; interaction with DIXDC1 prevents interaction with AXIN1. Interacts with GADD45 and MAP2K6. Interacts with ZFP36; this interaction enhances the association with SH3KBP1/CIN85. Interacts with SH3KBP1; this interaction enhances the association with ZFP36. Mg(2+) serves as cofactor. Widely expressed. High expression was found in skeletal muscle, kidney, testis followed by heart brain and lung. Low expression was found in spleen.

It localises to the cytoplasm. The protein resides in the perinuclear region. The enzyme catalyses L-seryl-[protein] + ATP = O-phospho-L-seryl-[protein] + ADP + H(+). It catalyses the reaction L-threonyl-[protein] + ATP = O-phospho-L-threonyl-[protein] + ADP + H(+). With respect to regulation, N-terminal autoinhibitory domain interacts with the C-terminal kinase domain, inhibiting kinase activity, and preventing interaction with its substrate, MAP2K6. The GADD45 proteins activate the kinase by binding to the N-terminal domain. Activated by phosphorylation on Thr-1494. Component of a protein kinase signal transduction cascade. Activates the CSBP2, P38 and JNK MAPK pathways, but not the ERK pathway. Specifically phosphorylates and activates MAP2K4 and MAP2K6. This is Mitogen-activated protein kinase kinase kinase 4 (Map3k4) from Mus musculus (Mouse).